The sequence spans 431 residues: Enolase (431 aa).

Glutamine 167 is a (2R)-2-phosphoglycerate binding site. Glutamate 209 acts as the Proton donor in catalysis. Positions 246, 289, and 316 each coordinate Mg(2+). Residues lysine 341, arginine 370, serine 371, and lysine 392 each coordinate (2R)-2-phosphoglycerate. Residue lysine 341 is the Proton acceptor of the active site.

The protein belongs to the enolase family. As to quaternary structure, component of the RNA degradosome, a multiprotein complex involved in RNA processing and mRNA degradation. Mg(2+) serves as cofactor.

The protein resides in the cytoplasm. It localises to the secreted. Its subcellular location is the cell surface. The enzyme catalyses (2R)-2-phosphoglycerate = phosphoenolpyruvate + H2O. Its pathway is carbohydrate degradation; glycolysis; pyruvate from D-glyceraldehyde 3-phosphate: step 4/5. Catalyzes the reversible conversion of 2-phosphoglycerate (2-PG) into phosphoenolpyruvate (PEP). It is essential for the degradation of carbohydrates via glycolysis. This chain is Enolase, found in Shewanella halifaxensis (strain HAW-EB4).